Consider the following 452-residue polypeptide: Ribosomal protein uS12 methylthiotransferase RimO (452 aa).

In terms of domain architecture, MTTase N-terminal spans 3 to 118 (GKIGFVSLGC…VMQVIHLHLP (116 aa)). Residues cysteine 12, cysteine 48, cysteine 77, cysteine 149, cysteine 153, and cysteine 156 each contribute to the [4Fe-4S] cluster site. The 248-residue stretch at 135–382 (LTPKHYAYLK…AKAEEISVGR (248 aa)) folds into the Radical SAM core domain. One can recognise a TRAM domain in the interval 384-452 (AKKIGKRLQV…SQGHDLIAET (69 aa)).

This sequence belongs to the methylthiotransferase family. RimO subfamily. It depends on [4Fe-4S] cluster as a cofactor.

The protein resides in the cytoplasm. The enzyme catalyses L-aspartate(89)-[ribosomal protein uS12]-hydrogen + (sulfur carrier)-SH + AH2 + 2 S-adenosyl-L-methionine = 3-methylsulfanyl-L-aspartate(89)-[ribosomal protein uS12]-hydrogen + (sulfur carrier)-H + 5'-deoxyadenosine + L-methionine + A + S-adenosyl-L-homocysteine + 2 H(+). Functionally, catalyzes the methylthiolation of an aspartic acid residue of ribosomal protein uS12. In Polynucleobacter necessarius subsp. necessarius (strain STIR1), this protein is Ribosomal protein uS12 methylthiotransferase RimO.